Consider the following 512-residue polypeptide: Probable DNA ligase (512 aa).

An ATP-binding site is contributed by D217. Residue K219 is the N6-AMP-lysine intermediate of the active site. R224, R239, E268, F306, R377, and K383 together coordinate ATP.

This sequence belongs to the ATP-dependent DNA ligase family. It depends on Mg(2+) as a cofactor.

The enzyme catalyses ATP + (deoxyribonucleotide)n-3'-hydroxyl + 5'-phospho-(deoxyribonucleotide)m = (deoxyribonucleotide)n+m + AMP + diphosphate.. DNA ligase that seals nicks in double-stranded DNA during DNA replication, DNA recombination and DNA repair. This chain is Probable DNA ligase, found in Beutenbergia cavernae (strain ATCC BAA-8 / DSM 12333 / CCUG 43141 / JCM 11478 / NBRC 16432 / NCIMB 13614 / HKI 0122).